The following is a 274-amino-acid chain: Exosome complex component Rrp42 (274 aa).

This sequence belongs to the RNase PH family. Rrp42 subfamily. As to quaternary structure, component of the archaeal exosome complex. Forms a hexameric ring-like arrangement composed of 3 Rrp41-Rrp42 heterodimers. The hexameric ring associates with a trimer of Rrp4 and/or Csl4 subunits.

It is found in the cytoplasm. Its function is as follows. Non-catalytic component of the exosome, which is a complex involved in RNA degradation. Contributes to the structuring of the Rrp41 active site. This Pyrococcus abyssi (strain GE5 / Orsay) protein is Exosome complex component Rrp42.